The sequence spans 393 residues: NAD(P)H-quinone oxidoreductase subunit H, chloroplastic (393 aa).

This sequence belongs to the complex I 49 kDa subunit family. In terms of assembly, NDH is composed of at least 16 different subunits, 5 of which are encoded in the nucleus.

Its subcellular location is the plastid. It is found in the chloroplast thylakoid membrane. It catalyses the reaction a plastoquinone + NADH + (n+1) H(+)(in) = a plastoquinol + NAD(+) + n H(+)(out). The enzyme catalyses a plastoquinone + NADPH + (n+1) H(+)(in) = a plastoquinol + NADP(+) + n H(+)(out). Its function is as follows. NDH shuttles electrons from NAD(P)H:plastoquinone, via FMN and iron-sulfur (Fe-S) centers, to quinones in the photosynthetic chain and possibly in a chloroplast respiratory chain. The immediate electron acceptor for the enzyme in this species is believed to be plastoquinone. Couples the redox reaction to proton translocation, and thus conserves the redox energy in a proton gradient. This is NAD(P)H-quinone oxidoreductase subunit H, chloroplastic from Nicotiana sylvestris (Wood tobacco).